The following is a 406-amino-acid chain: S-adenosylmethionine synthase (406 aa).

ATP is bound at residue H5. Position 7 (D7) interacts with Mg(2+). E33 provides a ligand contact to K(+). E46 and Q89 together coordinate L-methionine. The segment at 89-99 is flexible loop; it reads QSPDIAQGVDT. Residues 164–166, 240–241, D249, 255–256, A272, and K276 each bind ATP; these read DGK, KF, and RK. D249 serves as a coordination point for L-methionine. K280 contacts L-methionine.

Belongs to the AdoMet synthase family. As to quaternary structure, homotetramer; dimer of dimers. The cofactor is Mg(2+). K(+) serves as cofactor.

It is found in the cytoplasm. It catalyses the reaction L-methionine + ATP + H2O = S-adenosyl-L-methionine + phosphate + diphosphate. Its pathway is amino-acid biosynthesis; S-adenosyl-L-methionine biosynthesis; S-adenosyl-L-methionine from L-methionine: step 1/1. Catalyzes the formation of S-adenosylmethionine (AdoMet) from methionine and ATP. The overall synthetic reaction is composed of two sequential steps, AdoMet formation and the subsequent tripolyphosphate hydrolysis which occurs prior to release of AdoMet from the enzyme. This chain is S-adenosylmethionine synthase, found in Synechococcus sp. (strain ATCC 27144 / PCC 6301 / SAUG 1402/1) (Anacystis nidulans).